The following is a 574-amino-acid chain: DNA mismatch repair protein MutL (574 aa).

It belongs to the DNA mismatch repair MutL/HexB family.

This protein is involved in the repair of mismatches in DNA. It is required for dam-dependent methyl-directed DNA mismatch repair. May act as a 'molecular matchmaker', a protein that promotes the formation of a stable complex between two or more DNA-binding proteins in an ATP-dependent manner without itself being part of a final effector complex. This chain is DNA mismatch repair protein MutL, found in Coxiella burnetii (strain RSA 331 / Henzerling II).